The chain runs to 288 residues: MSSYSTRQVGAANTLDYKVYIEKDGKLVSPFHDIPLYANEEKTILNMIVEVPRWTNAKLEISKEQKLNPIIQDTKKGKLRFVRNCFPHHGYIHNYGAFPQTWEDPNQSHPETKAKGDNDPLDVCEIGEKVATVGEVKQVKVLGVMALLDEGETDWKVIVIDVNDPLAPKLNDIEDVETHLPGLLRATNEWFRIYKIPDGKPENQFAFSGECKNKKYAEEVIGECAEAWEKLIKGESVDSKGIDLTNTTLSSTPSYSDAAAQEIPSASPAPAAPIDKSIDKWFFISGAH.

Arginine 80 is a diphosphate binding site. Aspartate 117, aspartate 122, and aspartate 154 together coordinate Mg(2+). The segment at threonine 252 to alanine 271 is disordered. The span at alanine 258 to alanine 271 shows a compositional bias: low complexity.

The protein belongs to the PPase family. It depends on Mg(2+) as a cofactor.

The protein localises to the cytoplasm. It carries out the reaction diphosphate + H2O = 2 phosphate + H(+). This Candida albicans (strain SC5314 / ATCC MYA-2876) (Yeast) protein is Inorganic pyrophosphatase (IPP1).